A 138-amino-acid polypeptide reads, in one-letter code: Basic phospholipase A2 BP-II (138 aa).

Positions 1-16 (MRTLWIMAVLLVGVDG) are cleaved as a signal peptide. 7 disulfide bridges follow: cysteine 42–cysteine 132, cysteine 44–cysteine 60, cysteine 59–cysteine 112, cysteine 65–cysteine 138, cysteine 66–cysteine 105, cysteine 73–cysteine 98, and cysteine 91–cysteine 103. Ca(2+)-binding residues include glycine 45 and glycine 47. Histidine 63 is a catalytic residue. Aspartate 106 is an active-site residue.

It belongs to the phospholipase A2 family. Group II subfamily. K49 sub-subfamily. In terms of assembly, exists as a monomer in both solution and crystal states. In the presence of SDS or probably in the presence of phospholipids, assembles to form SDS-resistant stable oligomers. Requires Ca(2+) as cofactor. In terms of tissue distribution, expressed by the venom gland.

It is found in the secreted. It catalyses the reaction a 1,2-diacyl-sn-glycero-3-phosphocholine + H2O = a 1-acyl-sn-glycero-3-phosphocholine + a fatty acid + H(+). In terms of biological role, snake venom phospholipase A2 (PLA2) that shows anticoagulant activities, strong myolytic activity, infiltration of polymorphonuclear cells, and edema in stromal tissues. Induces cell death of Jurkat cells in a concentration-dependent manner. Shows a low phospholipase A2 activity. PLA2 catalyzes the calcium-dependent hydrolysis of the 2-acyl groups in 3-sn-phosphoglycerides. The chain is Basic phospholipase A2 BP-II from Protobothrops flavoviridis (Habu).